A 314-amino-acid polypeptide reads, in one-letter code: Tudor-interacting repair regulator protein (314 aa).

Glycine 2 is lipidated: N-myristoyl glycine.

Belongs to the Nudix hydrolase family. TIRR subfamily. As to quaternary structure, interacts (via the cytoplasmic part) with syndecan-4 (SDC4), but not with other syndecan proteins. Myristoylated in vitro; additional evidence is however required to confirm myristoylation in vivo. Ubiquitously expressed. Expressed in embryonic brain, eyes, gizzard, heart, intestine, kidney, liver, tibia and skin.

It is found in the nucleus. Its subcellular location is the cytoplasm. The protein resides in the cytoskeleton. It localises to the cell membrane. The protein localises to the cell junction. It is found in the focal adhesion. Functionally, key regulator of TP53BP1 required to stabilize TP53BP1 and regulate its recruitment to chromatin. This Gallus gallus (Chicken) protein is Tudor-interacting repair regulator protein (NUDT16L1).